The primary structure comprises 817 residues: LisH domain-containing protein ARMC9 (817 aa).

The region spanning 15 to 47 (SESDLLSMISEYLKFGEFEETARTFEKEVKRKG) is the LisH domain. Disordered regions lie at residues 580-605 (SATI…EEDV), 610-629 (LDKE…ESLL), and 642-817 (KTKR…SNRK). Residues 586–605 (QEPESDDEEDEDDDDDEEDV) show a composition bias toward acidic residues. Composition is skewed to polar residues over residues 692–715 (SSRP…TLAT) and 740–750 (GQTTNSVQSYS). Positions 805–817 (GRPSQQSSQSNRK) are enriched in low complexity.

In terms of tissue distribution, expressed in multiple CNS regions, including the cerebellum, all periventricular regions, and all layers of the retina.

The protein localises to the cytoplasm. It localises to the cytoskeleton. Its subcellular location is the cilium basal body. The protein resides in the cell projection. It is found in the cilium. The protein localises to the microtubule organizing center. It localises to the centrosome. Its subcellular location is the centriole. In terms of biological role, involved in ciliogenesis. It is required for appropriate acetylation and polyglutamylation of ciliary microtubules, and regulation of cilium length. Acts as a positive regulator of hedgehog (Hh) signaling. In Danio rerio (Zebrafish), this protein is LisH domain-containing protein ARMC9 (armc9).